The primary structure comprises 167 residues: 3-dehydroquinate dehydratase (167 aa).

Catalysis depends on tyrosine 22, which acts as the Proton acceptor. Asparagine 76, histidine 82, and aspartate 89 together coordinate substrate. The active-site Proton donor is the histidine 102. Residues 103–104 and arginine 113 each bind substrate; that span reads LT.

The protein belongs to the type-II 3-dehydroquinase family. As to quaternary structure, homododecamer.

It catalyses the reaction 3-dehydroquinate = 3-dehydroshikimate + H2O. Its pathway is metabolic intermediate biosynthesis; chorismate biosynthesis; chorismate from D-erythrose 4-phosphate and phosphoenolpyruvate: step 3/7. Catalyzes a trans-dehydration via an enolate intermediate. This chain is 3-dehydroquinate dehydratase, found in Helicobacter pylori (strain P12).